A 115-amino-acid polypeptide reads, in one-letter code: MVNIYNDINALEATFRKTPEFEALQAAVEVVKSDEEALNVFKNFRKIQIELQKKQLAGEELLEDELVYAQKASQLVQQNEKISAMLEAEMKLSKVIEEVNRILIKPIQGLYEDIQ.

It belongs to the UPF0342 family.

This chain is UPF0342 protein Bsph_0375, found in Lysinibacillus sphaericus (strain C3-41).